We begin with the raw amino-acid sequence, 474 residues long: Stabilizer of axonemal microtubules 1 (474 aa).

Mn stretches follow at residues 30–64, 65–97, 98–131, 132–165, 166–199, 200–232, 233–266, 267–299, 300–332, 333–366, 367–400, and 401–434; these read KPCL…KGSI, PMEG…PSEE, NMDL…PYSN, KMEY…PASV, RFDN…LCNI, PLED…PCEI, PFES…GLDM, PFSN…PPED, SMDL…RKSG, RFEG…FPTE, PLDC…RGNV, and PVEG…TFEE. The segment at 318-350 is disordered; it reads PARSCRPAPQIRKSGRFEGSSTTKDDYKQWSSM. The interval 444 to 474 is disordered; it reads KPVSQAGSQQSSHLSVDDSENPSQRKLEVSA. Residues 448-457 show a composition bias toward polar residues; sequence QAGSQQSSHL.

This sequence belongs to the FAM154 family. As to quaternary structure, associates with microtubules via the Mn regions.

It localises to the cytoplasm. It is found in the cytoskeleton. The protein resides in the microtubule organizing center. The protein localises to the centrosome. Its subcellular location is the centriole. It localises to the cilium basal body. It is found in the cilium axoneme. The protein resides in the flagellum axoneme. Functionally, may play a role in the regulation of cilium length. Stabilizes microtubules at low temperature. The polypeptide is Stabilizer of axonemal microtubules 1 (SAXO1) (Macaca fascicularis (Crab-eating macaque)).